The primary structure comprises 219 residues: Ribosomal RNA small subunit methyltransferase G (219 aa).

Residues Gly-78, Phe-83, 129–130, and Arg-146 contribute to the S-adenosyl-L-methionine site; that span reads GE.

It belongs to the methyltransferase superfamily. RNA methyltransferase RsmG family.

The protein resides in the cytoplasm. The enzyme catalyses guanosine(527) in 16S rRNA + S-adenosyl-L-methionine = N(7)-methylguanosine(527) in 16S rRNA + S-adenosyl-L-homocysteine. Specifically methylates the N7 position of guanine in position 527 of 16S rRNA. This Geotalea uraniireducens (strain Rf4) (Geobacter uraniireducens) protein is Ribosomal RNA small subunit methyltransferase G.